The chain runs to 466 residues: 3-isopropylmalate dehydratase large subunit (466 aa).

Cys347, Cys407, and Cys410 together coordinate [4Fe-4S] cluster.

This sequence belongs to the aconitase/IPM isomerase family. LeuC type 1 subfamily. In terms of assembly, heterodimer of LeuC and LeuD. The cofactor is [4Fe-4S] cluster.

The enzyme catalyses (2R,3S)-3-isopropylmalate = (2S)-2-isopropylmalate. It functions in the pathway amino-acid biosynthesis; L-leucine biosynthesis; L-leucine from 3-methyl-2-oxobutanoate: step 2/4. In terms of biological role, catalyzes the isomerization between 2-isopropylmalate and 3-isopropylmalate, via the formation of 2-isopropylmaleate. This Enterobacter sp. (strain 638) protein is 3-isopropylmalate dehydratase large subunit.